The following is a 206-amino-acid chain: Small ribosomal subunit protein eS1 (206 aa).

The protein belongs to the eukaryotic ribosomal protein eS1 family.

This Natronomonas pharaonis (strain ATCC 35678 / DSM 2160 / CIP 103997 / JCM 8858 / NBRC 14720 / NCIMB 2260 / Gabara) (Halobacterium pharaonis) protein is Small ribosomal subunit protein eS1.